Reading from the N-terminus, the 354-residue chain is Chorismate synthase (354 aa).

Residues Arg48 and Arg54 each coordinate NADP(+). Residues 125–127 (RSS), 238–239 (NA), Gly278, 293–297 (KPTSS), and Arg319 contribute to the FMN site.

The protein belongs to the chorismate synthase family. In terms of assembly, homotetramer. FMNH2 serves as cofactor.

The catalysed reaction is 5-O-(1-carboxyvinyl)-3-phosphoshikimate = chorismate + phosphate. The protein operates within metabolic intermediate biosynthesis; chorismate biosynthesis; chorismate from D-erythrose 4-phosphate and phosphoenolpyruvate: step 7/7. Its function is as follows. Catalyzes the anti-1,4-elimination of the C-3 phosphate and the C-6 proR hydrogen from 5-enolpyruvylshikimate-3-phosphate (EPSP) to yield chorismate, which is the branch point compound that serves as the starting substrate for the three terminal pathways of aromatic amino acid biosynthesis. This reaction introduces a second double bond into the aromatic ring system. The polypeptide is Chorismate synthase (Blochmanniella pennsylvanica (strain BPEN)).